Here is a 268-residue protein sequence, read N- to C-terminus: Type III pantothenate kinase (268 aa).

Residue 18 to 25 coordinates ATP; sequence DIGNTTTT. Residues Tyr108 and 115–118 contribute to the substrate site; that span reads GADR. Asp117 (proton acceptor) is an active-site residue. Asp138 serves as a coordination point for K(+). Thr141 contacts ATP. Thr193 lines the substrate pocket.

The protein belongs to the type III pantothenate kinase family. In terms of assembly, homodimer. It depends on NH4(+) as a cofactor. K(+) serves as cofactor.

The protein localises to the cytoplasm. It catalyses the reaction (R)-pantothenate + ATP = (R)-4'-phosphopantothenate + ADP + H(+). It functions in the pathway cofactor biosynthesis; coenzyme A biosynthesis; CoA from (R)-pantothenate: step 1/5. In terms of biological role, catalyzes the phosphorylation of pantothenate (Pan), the first step in CoA biosynthesis. In Chlorobaculum parvum (strain DSM 263 / NCIMB 8327) (Chlorobium vibrioforme subsp. thiosulfatophilum), this protein is Type III pantothenate kinase.